Here is a 406-residue protein sequence, read N- to C-terminus: Glucose-1-phosphate adenylyltransferase (406 aa).

Residues Y100, G165, 181–182 (EK), and S199 each bind alpha-D-glucose 1-phosphate.

Belongs to the bacterial/plant glucose-1-phosphate adenylyltransferase family. In terms of assembly, homotetramer.

It catalyses the reaction alpha-D-glucose 1-phosphate + ATP + H(+) = ADP-alpha-D-glucose + diphosphate. Its pathway is glycan biosynthesis; glycogen biosynthesis. Involved in the biosynthesis of ADP-glucose, a building block required for the elongation reactions to produce glycogen. Catalyzes the reaction between ATP and alpha-D-glucose 1-phosphate (G1P) to produce pyrophosphate and ADP-Glc. The sequence is that of Glucose-1-phosphate adenylyltransferase from Streptomyces avermitilis (strain ATCC 31267 / DSM 46492 / JCM 5070 / NBRC 14893 / NCIMB 12804 / NRRL 8165 / MA-4680).